The chain runs to 419 residues: 3-oxo-isoapionate-4-phosphate decarboxylase (419 aa).

Residues Lys179, Asp181, and Glu182 each coordinate Mg(2+). Position 179 is an N6-carboxylysine (Lys179).

The protein belongs to the RuBisCO large chain family. The cofactor is Mg(2+).

The enzyme catalyses 3-oxoisoapionate 4-phosphate + H(+) = L-erythrulose 1-phosphate + CO2. It functions in the pathway carbohydrate metabolism. Its function is as follows. Involved in catabolism of D-apiose. Catalyzes the decarboxylation of 3-oxo-isoapionate 4-phosphate to L-erythrulose 1-phosphate. The protein is 3-oxo-isoapionate-4-phosphate decarboxylase of Rhizobium rhizogenes (strain K84 / ATCC BAA-868) (Agrobacterium radiobacter).